The following is a 283-amino-acid chain: Protein FAM78A (283 aa).

This sequence belongs to the FAM78 family.

In Mus musculus (Mouse), this protein is Protein FAM78A (Fam78a).